Reading from the N-terminus, the 63-residue chain is Putative transmembrane protein ORF63 (63 aa).

The Extracellular segment spans residues 1-8 (MQSGNFTL). Residues 9-29 (EVIMYLINSILAFIMIFFTFV) form a helical membrane-spanning segment. The Cytoplasmic portion of the chain corresponds to 30-31 (NP). Residues 32-52 (SLLKCQYWTYILVALITAIIF) traverse the membrane as a helical segment. Over 53-63 (HTGSKVGKSSG) the chain is Extracellular.

It is found in the host membrane. In Acidianus filamentous virus 1 (isolate United States/Yellowstone) (AFV-1), this protein is Putative transmembrane protein ORF63.